A 299-amino-acid polypeptide reads, in one-letter code: Aspartate carbamoyltransferase catalytic subunit (299 aa).

Residues arginine 51 and threonine 52 each contribute to the carbamoyl phosphate site. L-aspartate is bound at residue lysine 80. Arginine 101, histidine 129, and glutamine 132 together coordinate carbamoyl phosphate. The L-aspartate site is built by arginine 162 and arginine 221. Leucine 260 and proline 261 together coordinate carbamoyl phosphate.

It belongs to the aspartate/ornithine carbamoyltransferase superfamily. ATCase family. Heterooligomer of catalytic and regulatory chains.

The enzyme catalyses carbamoyl phosphate + L-aspartate = N-carbamoyl-L-aspartate + phosphate + H(+). Its pathway is pyrimidine metabolism; UMP biosynthesis via de novo pathway; (S)-dihydroorotate from bicarbonate: step 2/3. In terms of biological role, catalyzes the condensation of carbamoyl phosphate and aspartate to form carbamoyl aspartate and inorganic phosphate, the committed step in the de novo pyrimidine nucleotide biosynthesis pathway. The chain is Aspartate carbamoyltransferase catalytic subunit from Sulfolobus acidocaldarius (strain ATCC 33909 / DSM 639 / JCM 8929 / NBRC 15157 / NCIMB 11770).